A 620-amino-acid polypeptide reads, in one-letter code: Chaperone protein HscA homolog (620 aa).

The protein belongs to the heat shock protein 70 family.

Chaperone involved in the maturation of iron-sulfur cluster-containing proteins. Has a low intrinsic ATPase activity which is markedly stimulated by HscB. This chain is Chaperone protein HscA homolog, found in Shewanella sediminis (strain HAW-EB3).